Consider the following 676-residue polypeptide: Serine/threonine-protein kinase Haspin homolog ALK2 (676 aa).

The disordered stretch occupies residues 53-93 (HKGSAEDESQSFFTSSDSPTSKTRPVGKTIENDDYYGKRSS). Residues 62–75 (QSFFTSSDSPTSKT) are compositionally biased toward polar residues. Residues 116-118 (KEN) carry the KEN box motif. The short motif at 150–158 (RTPLRPISN) is the D box element. A disordered region spans residues 228–312 (SSRSVNDQDP…HKTSHSSLNK (85 aa)). Polar residues predominate over residues 232-259 (VNDQDPNFVQPKPTNSLQKKSSISSFHN). Residues 383 to 672 (LCDVKYILHD…TCGDLLSLKG (290 aa)) enclose the Protein kinase domain. Residues 389–397 (ILHDLREAQ) and lysine 430 contribute to the ATP site.

It belongs to the protein kinase superfamily. Ser/Thr protein kinase family. Haspin subfamily. Periodically phosphorylated during the cell cycle with a phosphorylation peak during mitosis and hyperphosphorylated after DNA damage.

It catalyses the reaction L-seryl-[protein] + ATP = O-phospho-L-seryl-[protein] + ADP + H(+). It carries out the reaction L-threonyl-[protein] + ATP = O-phospho-L-threonyl-[protein] + ADP + H(+). Serine/threonine haspin-like protein kinase involved in cell cycle regulation. This chain is Serine/threonine-protein kinase Haspin homolog ALK2 (ALK2), found in Saccharomyces cerevisiae (strain ATCC 204508 / S288c) (Baker's yeast).